A 433-amino-acid polypeptide reads, in one-letter code: Glutamate--tRNA ligase (433 aa).

The short motif at 10–20 (PSPTGYLHIGG) is the 'HIGH' region element. Positions 211–215 (KMSKR) match the 'KMSKS' region motif. Lysine 214 provides a ligand contact to ATP.

This sequence belongs to the class-I aminoacyl-tRNA synthetase family. Glutamate--tRNA ligase type 1 subfamily. As to quaternary structure, monomer.

It localises to the cytoplasm. It carries out the reaction tRNA(Glu) + L-glutamate + ATP = L-glutamyl-tRNA(Glu) + AMP + diphosphate. Functionally, catalyzes the attachment of glutamate to tRNA(Glu) in a two-step reaction: glutamate is first activated by ATP to form Glu-AMP and then transferred to the acceptor end of tRNA(Glu). The chain is Glutamate--tRNA ligase from Akkermansia muciniphila (strain ATCC BAA-835 / DSM 22959 / JCM 33894 / BCRC 81048 / CCUG 64013 / CIP 107961 / Muc).